We begin with the raw amino-acid sequence, 358 residues long: UPF0421 protein BT9727_2513 (358 aa).

4 consecutive transmembrane segments (helical) span residues 19 to 39 (IAVFLTVLVCEFFNIPTIFAV), 74 to 94 (FTFFLGHQALSYALAAMFTIV), 109 to 129 (TLTAVAMIPITADHYFTAFLI), and 131 to 151 (LATTSTGIIVSTVVNFFILPP).

The protein belongs to the UPF0421 family.

The protein resides in the cell membrane. In Bacillus thuringiensis subsp. konkukian (strain 97-27), this protein is UPF0421 protein BT9727_2513.